The following is a 52-amino-acid chain: uncharacterized protein (52 aa).

The next 2 helical transmembrane spans lie at 4–24 (IIIPAILAIFALWILLQISLE) and 25–45 (MSIVKNPMNYFIVFIIFFLFV).

It localises to the cell membrane. This is an uncharacterized protein from Bacillus subtilis (strain 168).